The sequence spans 1154 residues: ATP-dependent helicase/deoxyribonuclease subunit B (1154 aa).

In terms of domain architecture, UvrD-like helicase ATP-binding spans 1-284; that stretch reads MSVRFIIGRS…EQLRHNVRHK (284 aa). ATP is bound at residue 8–15; the sequence is GRSGSGKT. The region spanning 279–583 is the UvrD-like helicase C-terminal domain; sequence HNVRHKHEEL…QFSLVPPATD (305 aa). 4 residues coordinate [4Fe-4S] cluster: Cys-799, Cys-1120, Cys-1123, and Cys-1129.

This sequence belongs to the helicase family. AddB/RexB type 1 subfamily. As to quaternary structure, heterodimer of AddA and AddB. Mg(2+) serves as cofactor. The cofactor is [4Fe-4S] cluster.

The heterodimer acts as both an ATP-dependent DNA helicase and an ATP-dependent, dual-direction single-stranded exonuclease. Recognizes the chi site generating a DNA molecule suitable for the initiation of homologous recombination. The AddB subunit has 5' -&gt; 3' nuclease activity but not helicase activity. The polypeptide is ATP-dependent helicase/deoxyribonuclease subunit B (Anoxybacillus flavithermus (strain DSM 21510 / WK1)).